A 131-amino-acid chain; its full sequence is Probable calcium-binding protein CML34 (131 aa).

EF-hand domains follow at residues 1-33 (MSAK…FSPY), 34-69 (FTQE…MLKE), 70-97 (VFVF…LGKK), and 98-131 (FTEE…IGDI). Residues Asp11, Asn13, Asp15, Lys17, Glu22, Asp47, Asp49, Asn51, Glu53, and Glu58 each coordinate Ca(2+). 5 residues coordinate Ca(2+): Asp111, Asp113, Asp115, Tyr117, and Glu122.

Potential calcium sensor. The sequence is that of Probable calcium-binding protein CML34 (CML34) from Arabidopsis thaliana (Mouse-ear cress).